Consider the following 254-residue polypeptide: Esterase YbfF (254 aa).

Residues Ser89 and His234 contribute to the active site.

The protein belongs to the DmpD/TodF/XylF esterase family.

Its function is as follows. Displays esterase activity toward palmitoyl-CoA, malonyl-CoA and pNP-butyrate. This Escherichia coli (strain K12) protein is Esterase YbfF (ybfF).